Reading from the N-terminus, the 341-residue chain is Glycerol-3-phosphate dehydrogenase [NAD(P)+] (341 aa).

Residues Ser14, Phe15, Arg35, and Lys108 each contribute to the NADPH site. 2 residues coordinate sn-glycerol 3-phosphate: Lys108 and Gly136. Ala140 serves as a coordination point for NADPH. Sn-glycerol 3-phosphate-binding residues include Lys191, Asp244, Ser254, Arg255, and Asn256. The Proton acceptor role is filled by Lys191. Arg255 is an NADPH binding site. NADPH contacts are provided by Val279 and Glu281.

The protein belongs to the NAD-dependent glycerol-3-phosphate dehydrogenase family.

The protein resides in the cytoplasm. The catalysed reaction is sn-glycerol 3-phosphate + NAD(+) = dihydroxyacetone phosphate + NADH + H(+). It catalyses the reaction sn-glycerol 3-phosphate + NADP(+) = dihydroxyacetone phosphate + NADPH + H(+). It functions in the pathway membrane lipid metabolism; glycerophospholipid metabolism. In terms of biological role, catalyzes the reduction of the glycolytic intermediate dihydroxyacetone phosphate (DHAP) to sn-glycerol 3-phosphate (G3P), the key precursor for phospholipid synthesis. This is Glycerol-3-phosphate dehydrogenase [NAD(P)+] from Pseudomonas putida (strain ATCC 47054 / DSM 6125 / CFBP 8728 / NCIMB 11950 / KT2440).